Here is a 264-residue protein sequence, read N- to C-terminus: S-adenosylmethionine decarboxylase proenzyme (264 aa).

Ser-112 acts as the Schiff-base intermediate with substrate; via pyruvic acid in catalysis. The residue at position 112 (Ser-112) is a Pyruvic acid (Ser); by autocatalysis. The Proton acceptor; for processing activity role is filled by His-117. The Proton donor; for catalytic activity role is filled by Cys-140.

Belongs to the prokaryotic AdoMetDC family. Type 2 subfamily. As to quaternary structure, heterooctamer of four alpha and four beta chains arranged as a tetramer of alpha/beta heterodimers. It depends on pyruvate as a cofactor. Post-translationally, is synthesized initially as an inactive proenzyme. Formation of the active enzyme involves a self-maturation process in which the active site pyruvoyl group is generated from an internal serine residue via an autocatalytic post-translational modification. Two non-identical subunits are generated from the proenzyme in this reaction, and the pyruvate is formed at the N-terminus of the alpha chain, which is derived from the carboxyl end of the proenzyme. The post-translation cleavage follows an unusual pathway, termed non-hydrolytic serinolysis, in which the side chain hydroxyl group of the serine supplies its oxygen atom to form the C-terminus of the beta chain, while the remainder of the serine residue undergoes an oxidative deamination to produce ammonia and the pyruvoyl group blocking the N-terminus of the alpha chain.

The catalysed reaction is S-adenosyl-L-methionine + H(+) = S-adenosyl 3-(methylsulfanyl)propylamine + CO2. It participates in amine and polyamine biosynthesis; S-adenosylmethioninamine biosynthesis; S-adenosylmethioninamine from S-adenosyl-L-methionine: step 1/1. Functionally, catalyzes the decarboxylation of S-adenosylmethionine to S-adenosylmethioninamine (dcAdoMet), the propylamine donor required for the synthesis of the polyamines spermine and spermidine from the diamine putrescine. In Shigella dysenteriae serotype 1 (strain Sd197), this protein is S-adenosylmethionine decarboxylase proenzyme.